A 387-amino-acid polypeptide reads, in one-letter code: Putative protein FAM157C (387 aa).

Disordered regions lie at residues 1–21, 182–226, and 329–353; these read MGPLFTTIPGAHSGPMRPLPK, TARP…GAEP, and RARDPAPTNFPLKCQKQRGASTSSG.

This sequence belongs to the FAM157 family.

In Homo sapiens (Human), this protein is Putative protein FAM157C (FAM157C).